Consider the following 132-residue polypeptide: Histone H2B.2 (132 aa).

A compositionally biased stretch (basic and acidic residues) spans 1–19; it reads MAPKAEKKPASKAPAEKKP. The tract at residues 1 to 39 is disordered; it reads MAPKAEKKPASKAPAEKKPAAKKTSSSVDPSKKRTKARK. N6-acetyllysine; alternate occurs at positions 7 and 8. Residues Lys-7 and Lys-8 each participate in a glycyl lysine isopeptide (Lys-Gly) (interchain with G-Cter in SUMO); alternate cross-link. At Ser-11 the chain carries Phosphoserine. The residue at position 12 (Lys-12) is an N6-acetyllysine. Lys-17 is modified (N6-acetyllysine; alternate). Residue Lys-17 forms a Glycyl lysine isopeptide (Lys-Gly) (interchain with G-Cter in SUMO); alternate linkage. Lys-18 participates in a covalent cross-link: Glycyl lysine isopeptide (Lys-Gly) (interchain with G-Cter in SUMO). Lys-125 is covalently cross-linked (Glycyl lysine isopeptide (Lys-Gly) (interchain with G-Cter in ubiquitin)).

Belongs to the histone H2B family. In terms of assembly, the nucleosome is a histone octamer containing two molecules each of H2A, H2B, H3 and H4 assembled in one H3-H4 heterotetramer and two H2A-H2B heterodimers. The octamer wraps approximately 147 bp of DNA. Post-translationally, monoubiquitinated by the UBC2-BRE1 complex to form H2BK123ub1. H2BK123ub1 gives a specific tag for epigenetic transcriptional activation and is also prerequisite for H3K4me and H3K79me formation. H2BK123ub1 also modulates the formation of double-strand breaks during meiosis and is a prerequisite for DNA-damage checkpoint activation. In terms of processing, phosphorylated by STE20 to form H2BS10ph during progression through meiotic prophase. May be correlated with chromosome condensation. Acetylated by GCN5 to form H2BK11ac and H2BK16ac. H2BK16ac can also be formed by ESA1. Acetylation of N-terminal lysines and particularly formation of H2BK11acK16ac has a positive effect on transcription. Post-translationally, sumoylation to form H2BK6su or H2BK7su, and probably also H2BK16su or H2BK17su, occurs preferentially near the telomeres and represses gene transcription.

The protein resides in the nucleus. Its subcellular location is the chromosome. Core component of nucleosome. Nucleosomes wrap and compact DNA into chromatin, limiting DNA accessibility to the cellular machineries which require DNA as a template. Histones thereby play a central role in transcription regulation, DNA repair, DNA replication and chromosomal stability. DNA accessibility is regulated via a complex set of post-translational modifications of histones, also called histone code, and nucleosome remodeling. This chain is Histone H2B.2 (HTB1), found in Kluyveromyces lactis (strain ATCC 8585 / CBS 2359 / DSM 70799 / NBRC 1267 / NRRL Y-1140 / WM37) (Yeast).